The chain runs to 133 residues: Putative dispanin subfamily A member 2d (133 aa).

Residues 1 to 57 (MNHTVQTFFSPVNSGQPPNYEMLKEEHKVAVLGVPHNPAPPTSTVIHIRSKTSVPHH) lie on the Extracellular side of the membrane. Lys24 is covalently cross-linked (Glycyl lysine isopeptide (Lys-Gly) (interchain with G-Cter in ubiquitin)). The helical transmembrane segment at 58–78 (VVWSLFNTLFMNPCCLGFIAF) threads the bilayer. Topologically, residues 79-107 (AYSVKSRDRKMVGNVTGAQAYASTTKCLN) are cytoplasmic. Residues Lys83, Lys88, and Lys104 each participate in a glycyl lysine isopeptide (Lys-Gly) (interchain with G-Cter in ubiquitin) cross-link. The chain crosses the membrane as a helical span at residues 108–128 (IWALILGILMTILLIIIPVLI). At 129–133 (FQAHR) the chain is on the extracellular side.

The protein belongs to the CD225/Dispanin family.

It localises to the membrane. The sequence is that of Putative dispanin subfamily A member 2d from Homo sapiens (Human).